The chain runs to 893 residues: Exocyst complex component 4 (893 aa).

Residues 1 to 27 (MNENGATPVAAARRHRPLPAERATSNS) are disordered.

The protein belongs to the SEC8 family. The exocyst complex is composed of sec-3/exoc1, sec-5/exoc2, sec-6/exoc3, sec-8/exoc4, sec-10/exoc5, sec-15/exoc6, exo-70/exoc7 and exo-84/exoc8. In terms of tissue distribution, pseudocoelom.

Functionally, component of the exocyst complex involved in the docking of exocytic vesicles with fusion sites on the plasma membrane. This Caenorhabditis elegans protein is Exocyst complex component 4 (sec-8).